The primary structure comprises 37 residues: Large ribosomal subunit protein bL36 (37 aa).

It belongs to the bacterial ribosomal protein bL36 family.

The polypeptide is Large ribosomal subunit protein bL36 (Rhodococcus erythropolis (strain PR4 / NBRC 100887)).